The primary structure comprises 104 residues: Protein RnfH (104 aa).

The disordered stretch occupies residues 80 to 104 (PLTADPKLNRKRRAKEKASAGKASN).

This sequence belongs to the UPF0125 (RnfH) family.

In Alcanivorax borkumensis (strain ATCC 700651 / DSM 11573 / NCIMB 13689 / SK2), this protein is Protein RnfH.